Here is a 709-residue protein sequence, read N- to C-terminus: ATP-binding cassette sub-family F member 3 (709 aa).

A2 bears the N-acetylalanine mark. S83 is modified (phosphoserine). The segment covering 129 to 143 has biased composition (basic and acidic residues); sequence RLKAKQEKRSEKDTL. Residues 129–171 form a disordered region; the sequence is RLKAKQEKRSEKDTLKTSNPLVLEEASASQAGSRKESRLESSG. S155, S157, and S161 each carry phosphoserine. Residues 161–171 show a composition bias toward basic and acidic residues; that stretch reads SRKESRLESSG. ABC transporter domains follow at residues 178 to 424 and 492 to 707; these read VRIE…LNQQ and LQLD…RREG. 210-217 is a binding site for ATP; that stretch reads GRNGLGKT. At S283 the chain carries Phosphoserine. 525–532 is a binding site for ATP; that stretch reads GENGAGKS.

Belongs to the ABC transporter superfamily. ABCF family. EF3 subfamily.

Functionally, displays an antiviral effect against flaviviruses in the presence of OAS1B. This Pongo abelii (Sumatran orangutan) protein is ATP-binding cassette sub-family F member 3 (ABCF3).